The sequence spans 388 residues: 1-deoxy-D-xylulose 5-phosphate reductoisomerase (388 aa).

The NADPH site is built by threonine 15, glycine 16, serine 17, isoleucine 18, and asparagine 127. Lysine 128 is a 1-deoxy-D-xylulose 5-phosphate binding site. Glutamate 129 lines the NADPH pocket. Aspartate 153 provides a ligand contact to Mn(2+). 1-deoxy-D-xylulose 5-phosphate contacts are provided by serine 154, glutamate 155, serine 179, and histidine 202. Residue glutamate 155 coordinates Mn(2+). Glycine 208 contributes to the NADPH binding site. Serine 215, asparagine 220, lysine 221, and glutamate 224 together coordinate 1-deoxy-D-xylulose 5-phosphate. Residue glutamate 224 participates in Mn(2+) binding.

The protein belongs to the DXR family. It depends on Mg(2+) as a cofactor. The cofactor is Mn(2+).

The enzyme catalyses 2-C-methyl-D-erythritol 4-phosphate + NADP(+) = 1-deoxy-D-xylulose 5-phosphate + NADPH + H(+). It functions in the pathway isoprenoid biosynthesis; isopentenyl diphosphate biosynthesis via DXP pathway; isopentenyl diphosphate from 1-deoxy-D-xylulose 5-phosphate: step 1/6. Functionally, catalyzes the NADPH-dependent rearrangement and reduction of 1-deoxy-D-xylulose-5-phosphate (DXP) to 2-C-methyl-D-erythritol 4-phosphate (MEP). The sequence is that of 1-deoxy-D-xylulose 5-phosphate reductoisomerase from Bacteroides fragilis (strain ATCC 25285 / DSM 2151 / CCUG 4856 / JCM 11019 / LMG 10263 / NCTC 9343 / Onslow / VPI 2553 / EN-2).